A 651-amino-acid chain; its full sequence is Meiotic expression up-regulated protein 6 (651 aa).

2 stretches are compositionally biased toward basic and acidic residues: residues 1 to 12 and 21 to 30; these read MSYEGREERPEQ and VSEHNEHDSG. The segment at 1-102 is disordered; it reads MSYEGREERP…EKKSKKKAKD (102 aa). Residues 72 to 83 are compositionally biased toward acidic residues; sequence TVDNIDPADDDP. The span at 90 to 102 shows a compositional bias: basic and acidic residues; it reads KVEEKKSKKKAKD. The PH domain occupies 194–261; it reads CRGLLFYSKS…WITDLKNAIA (68 aa). Disordered stretches follow at residues 365–430, 468–514, and 587–630; these read TVEA…GTPI, VATP…KGGN, and TIKP…QMPQ. 2 stretches are compositionally biased toward polar residues: residues 410–429 and 478–490; these read ESTS…NGTP and PSTA…SVVS. The segment covering 497-514 has biased composition (basic residues); sequence KKAGKKHHRHHKKKKGGN. Positions 587-604 are enriched in low complexity; it reads TIKPETPLTPTTTPTPRT.

The protein is Meiotic expression up-regulated protein 6 (meu6) of Schizosaccharomyces pombe (strain 972 / ATCC 24843) (Fission yeast).